The sequence spans 214 residues: uncharacterized protein (214 aa).

Its function is as follows. URF2 product may be involved in the transfer of iron-sulfur clusters to the NADH dehydrogenase complex. It may also be required for the assembly of the NADH dehydrogenase complex. This is an uncharacterized protein from Paracoccus denitrificans.